We begin with the raw amino-acid sequence, 119 residues long: uncharacterized protein (119 aa).

The first 18 residues, 1–18 (MPAVFMLASSSALQCGRG), serve as a signal peptide directing secretion. The tract at residues 23–100 (PRTEVGAGHS…MFPGPLRGPA (78 aa)) is disordered. A compositionally biased stretch (polar residues) spans 43–71 (GNQTSVIPATSRQAALGTSWTQRRTQPLQ). Residue Asn-44 is glycosylated (N-linked (GlcNAc...) asparagine).

The protein resides in the secreted. This is an uncharacterized protein from Homo sapiens (Human).